A 468-amino-acid chain; its full sequence is MEFSTKTEILQEQQAGAQLFVCTEEAQLNHPTALALLSSLEEGQNFADTKIPTGNGLQAVAVCCLKSTGRAALNKAAAEAAKWAQNQETVNVDVHAFEEAQAAAVAEAFAIAFGNAAYRFDRYKKEAKPAKFAEAVFHSAHEAAVKEALRVAEAQVYGQSLCRDLGNAAPNECTPEFLARTAKAEAEKLGAHAKIIEKDYIKENMGSFWSVAKGSVEDPYLVELSYFGAADKEAAPVVLVGKGITFDTGGISLKPGLNMDEMKFDMCGAATVISTFCAAVKLQLPINLIAVVATCENMPSGAANKPGDVVKSMKGLTIEVLNTDAEGRLILCDALTYAEQFKPKAVIDVATLTGACIVALGHDVSGVMGNNQDLVDSLLAASYNVDDKAWQLPLFETYKDQLKSNFADIPNIGTPGAGTITAATFLSYFTEGYPWAHLDIAGTAWKSGAEKGATGRPVPLLLNYLRNL.

Mn(2+) is bound by residues K242 and D247. K254 is an active-site residue. Mn(2+)-binding residues include D265, D324, and E326. R328 is a catalytic residue.

This sequence belongs to the peptidase M17 family. Mn(2+) serves as cofactor.

The protein localises to the cytoplasm. The enzyme catalyses Release of an N-terminal amino acid, Xaa-|-Yaa-, in which Xaa is preferably Leu, but may be other amino acids including Pro although not Arg or Lys, and Yaa may be Pro. Amino acid amides and methyl esters are also readily hydrolyzed, but rates on arylamides are exceedingly low.. The catalysed reaction is Release of an N-terminal amino acid, preferentially leucine, but not glutamic or aspartic acids.. In terms of biological role, presumably involved in the processing and regular turnover of intracellular proteins. Catalyzes the removal of unsubstituted N-terminal amino acids from various peptides. This Neisseria meningitidis serogroup A / serotype 4A (strain DSM 15465 / Z2491) protein is Probable cytosol aminopeptidase.